The sequence spans 166 residues: Bacterial non-heme ferritin (166 aa).

Residues 2–145 form the Ferritin-like diiron domain; the sequence is LSKNLLEALN…THINYLTRIG (144 aa). Fe cation is bound by residues glutamate 17, glutamate 50, histidine 53, glutamate 94, and glutamine 127.

This sequence belongs to the ferritin family. Prokaryotic subfamily.

It localises to the cytoplasm. It carries out the reaction 4 Fe(2+) + O2 + 6 H2O = 4 iron(III) oxide-hydroxide + 12 H(+). Its function is as follows. Iron-storage protein. This is Bacterial non-heme ferritin (ftnA) from Staphylococcus aureus (strain MRSA252).